Here is a 304-residue protein sequence, read N- to C-terminus: Large ribosomal subunit protein uL2 (304 aa).

The tract at residues 246 to 282 is disordered; it reads HTRGTAMNPVDHPHGGGEGRTRGKHPESPWGWKTKGY. A compositionally biased stretch (basic and acidic residues) spans 256–272; that stretch reads DHPHGGGEGRTRGKHPE.

It belongs to the universal ribosomal protein uL2 family. Part of the 50S ribosomal subunit. Forms a bridge to the 30S subunit in the 70S ribosome.

Functionally, one of the primary rRNA binding proteins. Required for association of the 30S and 50S subunits to form the 70S ribosome, for tRNA binding and peptide bond formation. It has been suggested to have peptidyltransferase activity; this is somewhat controversial. Makes several contacts with the 16S rRNA in the 70S ribosome. In Aquifex aeolicus (strain VF5), this protein is Large ribosomal subunit protein uL2.